A 277-amino-acid polypeptide reads, in one-letter code: UPF0496 protein At3g48650 (277 aa).

Helical transmembrane passes span 124-144 (YIFFAAALLSVLALWIYLGAV) and 145-165 (SLVVAAKVVIEVATPSIAPLW).

This sequence belongs to the UPF0496 family.

The protein resides in the membrane. In Arabidopsis thaliana (Mouse-ear cress), this protein is UPF0496 protein At3g48650.